The sequence spans 205 residues: Endoplasmic reticulum membrane protein complex subunit 10 (205 aa).

Positions 1 to 17 (MLVRLLRVILLASMVFC) are cleaved as a signal peptide. Over 18–172 (ADILQLSYSD…VKEVSWFQKN (155 aa)) the chain is Lumenal. The N-linked (GlcNAc...) asparagine glycan is linked to Asn-47. A helical membrane pass occupies residues 173–190 (WKMLLLGLLIYNFVAGSA). Residues 191–205 (KKQQQGGAGADQKTE) are Cytoplasmic-facing.

Component of the ER membrane protein complex (EMC).

Its subcellular location is the endoplasmic reticulum membrane. In terms of biological role, part of the endoplasmic reticulum membrane protein complex (EMC) that enables the energy-independent insertion into endoplasmic reticulum membranes of newly synthesized membrane proteins. Preferentially accommodates proteins with transmembrane domains that are weakly hydrophobic or contain destabilizing features such as charged and aromatic residues. Involved in the cotranslational insertion of multi-pass membrane proteins in which stop-transfer membrane-anchor sequences become ER membrane spanning helices. It is also required for the post-translational insertion of tail-anchored/TA proteins in endoplasmic reticulum membranes. By mediating the proper cotranslational insertion of N-terminal transmembrane domains in an N-exo topology, with translocated N-terminus in the lumen of the ER, controls the topology of multi-pass membrane proteins. In Saccharomyces cerevisiae (strain ATCC 204508 / S288c) (Baker's yeast), this protein is Endoplasmic reticulum membrane protein complex subunit 10.